The following is a 649-amino-acid chain: Glycerol-3-phosphate dehydrogenase, mitochondrial (649 aa).

69-97 (DVLIIGGGATGTGCALDAATRGLNVALVE) is an FAD binding site.

It belongs to the FAD-dependent glycerol-3-phosphate dehydrogenase family. FAD serves as cofactor.

It localises to the mitochondrion inner membrane. It is found in the mitochondrion intermembrane space. The catalysed reaction is a quinone + sn-glycerol 3-phosphate = dihydroxyacetone phosphate + a quinol. The protein operates within polyol metabolism; glycerol degradation via glycerol kinase pathway; glycerone phosphate from sn-glycerol 3-phosphate (anaerobic route): step 1/1. This is Glycerol-3-phosphate dehydrogenase, mitochondrial (GUT2) from Saccharomyces cerevisiae (strain ATCC 204508 / S288c) (Baker's yeast).